The following is a 207-amino-acid chain: Suppressor of IKBKE 1 (207 aa).

Coiled-coil stretches lie at residues 4–32 (TIDKILQDAKTLLERLKDHDNAAESLIDQ) and 154–193 (DAIQLDEDKAYNIQEKLAQLELENKELREILSTSKESLHS). The segment at 186-207 (TSKESLHSSKRESEWNFSEKTQ) is disordered. Residues 189-199 (ESLHSSKRESE) are compositionally biased toward basic and acidic residues.

This sequence belongs to the SIKE family. Interacts with IKBKE and TBK1 via its coiled coil region. Interaction with TBK1 is disrupted upon viral infection or TLR3 stimulation. Interacts with CDC42BPB. Associates with the STRIPAK core complex composed of PP2A catalytic and scaffolding subunits, the striatins (PP2A regulatory subunits), the striatin-associated proteins MOB4, STRIP1 and STRIP2, PDCD10 and members of the STE20 kinases, such as STK24 and STK26.

Functionally, suppressor of IKK-epsilon. Associates with the striatin-interacting phosphatase and kinase (STRIPAK) core complex, forming the extended (SIKE1:SLMAP)STRIPAK complex. The (SIKE1:SLMAP)STRIPAK complex dephosphorylates STK3 leading to the inhibition of Hippo signaling and the control of cell growth. The chain is Suppressor of IKBKE 1 (sike1) from Xenopus tropicalis (Western clawed frog).